Here is a 325-residue protein sequence, read N- to C-terminus: Elongation factor P--(R)-beta-lysine ligase (325 aa).

A substrate-binding site is contributed by 76 to 78 (SPE). ATP contacts are provided by residues 100–102 (RNE) and N109. Position 118 (Y118) interacts with substrate. 244–245 (EL) is an ATP binding site. E251 contacts substrate. G300 provides a ligand contact to ATP.

This sequence belongs to the class-II aminoacyl-tRNA synthetase family. EpmA subfamily. As to quaternary structure, homodimer.

The catalysed reaction is D-beta-lysine + L-lysyl-[protein] + ATP = N(6)-((3R)-3,6-diaminohexanoyl)-L-lysyl-[protein] + AMP + diphosphate + H(+). Functionally, with EpmB is involved in the beta-lysylation step of the post-translational modification of translation elongation factor P (EF-P). Catalyzes the ATP-dependent activation of (R)-beta-lysine produced by EpmB, forming a lysyl-adenylate, from which the beta-lysyl moiety is then transferred to the epsilon-amino group of a conserved specific lysine residue in EF-P. This Sodalis glossinidius (strain morsitans) protein is Elongation factor P--(R)-beta-lysine ligase.